We begin with the raw amino-acid sequence, 199 residues long: N-(5'-phosphoribosyl)anthranilate isomerase (199 aa).

It belongs to the TrpF family.

It catalyses the reaction N-(5-phospho-beta-D-ribosyl)anthranilate = 1-(2-carboxyphenylamino)-1-deoxy-D-ribulose 5-phosphate. Its pathway is amino-acid biosynthesis; L-tryptophan biosynthesis; L-tryptophan from chorismate: step 3/5. This is N-(5'-phosphoribosyl)anthranilate isomerase from Streptococcus pneumoniae serotype 4 (strain ATCC BAA-334 / TIGR4).